The following is a 459-amino-acid chain: Light-independent protochlorophyllide reductase subunit N (459 aa).

Cys-22, Cys-47, and Cys-107 together coordinate [4Fe-4S] cluster.

This sequence belongs to the BchN/ChlN family. In terms of assembly, protochlorophyllide reductase is composed of three subunits; ChlL, ChlN and ChlB. Forms a heterotetramer of two ChlB and two ChlN subunits. The cofactor is [4Fe-4S] cluster.

The protein localises to the plastid. The protein resides in the chloroplast. It carries out the reaction chlorophyllide a + oxidized 2[4Fe-4S]-[ferredoxin] + 2 ADP + 2 phosphate = protochlorophyllide a + reduced 2[4Fe-4S]-[ferredoxin] + 2 ATP + 2 H2O. Its pathway is porphyrin-containing compound metabolism; chlorophyll biosynthesis (light-independent). In terms of biological role, component of the dark-operative protochlorophyllide reductase (DPOR) that uses Mg-ATP and reduced ferredoxin to reduce ring D of protochlorophyllide (Pchlide) to form chlorophyllide a (Chlide). This reaction is light-independent. The NB-protein (ChlN-ChlB) is the catalytic component of the complex. The polypeptide is Light-independent protochlorophyllide reductase subunit N (Pinus contorta (Shore pine)).